The chain runs to 264 residues: Acyl-[acyl-carrier-protein]--UDP-N-acetylglucosamine O-acyltransferase (264 aa).

It belongs to the transferase hexapeptide repeat family. LpxA subfamily. As to quaternary structure, homotrimer.

Its subcellular location is the cytoplasm. The enzyme catalyses a (3R)-hydroxyacyl-[ACP] + UDP-N-acetyl-alpha-D-glucosamine = a UDP-3-O-[(3R)-3-hydroxyacyl]-N-acetyl-alpha-D-glucosamine + holo-[ACP]. It functions in the pathway glycolipid biosynthesis; lipid IV(A) biosynthesis; lipid IV(A) from (3R)-3-hydroxytetradecanoyl-[acyl-carrier-protein] and UDP-N-acetyl-alpha-D-glucosamine: step 1/6. Involved in the biosynthesis of lipid A, a phosphorylated glycolipid that anchors the lipopolysaccharide to the outer membrane of the cell. This Rickettsia africae (strain ESF-5) protein is Acyl-[acyl-carrier-protein]--UDP-N-acetylglucosamine O-acyltransferase.